The chain runs to 551 residues: Ubiquitin carboxyl-terminal hydrolase 24 (551 aa).

Disordered stretches follow at residues 51-104 (NSSV…SLRV) and 163-188 (NEDF…TESV). A USP domain is found at 197 to 551 (RGLINAGNLC…QAYVLFYKQV (355 aa)). Cys-206 (nucleophile) is an active-site residue. Polar residues predominate over residues 329-338 (SKSSVISSAN). Residues 329-349 (SKSSVISSANDDGDEWETVGP) form a disordered region. Catalysis depends on His-510, which acts as the Proton acceptor.

It belongs to the peptidase C19 family.

The catalysed reaction is Thiol-dependent hydrolysis of ester, thioester, amide, peptide and isopeptide bonds formed by the C-terminal Gly of ubiquitin (a 76-residue protein attached to proteins as an intracellular targeting signal).. In terms of biological role, recognizes and hydrolyzes the peptide bond at the C-terminal Gly of ubiquitin. Involved in the processing of poly-ubiquitin precursors as well as that of ubiquitinated proteins. The polypeptide is Ubiquitin carboxyl-terminal hydrolase 24 (UBP24) (Arabidopsis thaliana (Mouse-ear cress)).